A 317-amino-acid polypeptide reads, in one-letter code: GTPase Era (317 aa).

Residues arginine 17–glutamate 190 form the Era-type G domain. The interval glycine 25–serine 32 is G1. Glycine 25–serine 32 lines the GTP pocket. Residues glutamine 51–histidine 55 form a G2 region. The interval aspartate 72–glycine 75 is G3. GTP-binding positions include aspartate 72–leucine 76 and threonine 135–aspartate 138. The tract at residues threonine 135–aspartate 138 is G4. The tract at residues valine 169–alanine 171 is G5. Positions valine 221–lysine 303 constitute a KH type-2 domain.

The protein belongs to the TRAFAC class TrmE-Era-EngA-EngB-Septin-like GTPase superfamily. Era GTPase family. As to quaternary structure, monomer.

The protein localises to the cytoplasm. It is found in the cell membrane. Its function is as follows. An essential GTPase that binds both GDP and GTP, with rapid nucleotide exchange. Plays a role in 16S rRNA processing and 30S ribosomal subunit biogenesis and possibly also in cell cycle regulation and energy metabolism. This is GTPase Era from Streptomyces coelicolor (strain ATCC BAA-471 / A3(2) / M145).